A 350-amino-acid chain; its full sequence is S-adenosylmethionine:tRNA ribosyltransferase-isomerase (350 aa).

This sequence belongs to the QueA family. Monomer.

The protein localises to the cytoplasm. The catalysed reaction is 7-aminomethyl-7-carbaguanosine(34) in tRNA + S-adenosyl-L-methionine = epoxyqueuosine(34) in tRNA + adenine + L-methionine + 2 H(+). It participates in tRNA modification; tRNA-queuosine biosynthesis. Transfers and isomerizes the ribose moiety from AdoMet to the 7-aminomethyl group of 7-deazaguanine (preQ1-tRNA) to give epoxyqueuosine (oQ-tRNA). In Vibrio campbellii (strain ATCC BAA-1116), this protein is S-adenosylmethionine:tRNA ribosyltransferase-isomerase.